The primary structure comprises 1083 residues: Error-prone DNA polymerase (1083 aa).

Belongs to the DNA polymerase type-C family. DnaE2 subfamily.

The protein resides in the cytoplasm. It carries out the reaction DNA(n) + a 2'-deoxyribonucleoside 5'-triphosphate = DNA(n+1) + diphosphate. Functionally, DNA polymerase involved in damage-induced mutagenesis and translesion synthesis (TLS). It is not the major replicative DNA polymerase. This is Error-prone DNA polymerase from Xanthomonas oryzae pv. oryzae (strain KACC10331 / KXO85).